The sequence spans 515 residues: NADH-ubiquinone oxidoreductase chain 2 (515 aa).

The next 5 membrane-spanning stretches (helical) occupy residues 63–83 (WPIG…NSGS), 250–270 (VFIY…CSIA), 299–319 (FVLV…GLFI), 356–376 (AITF…AGFC), and 379–399 (FYLF…VGVV).

The protein belongs to the complex I subunit 2 family.

The protein resides in the mitochondrion inner membrane. The enzyme catalyses a ubiquinone + NADH + 5 H(+)(in) = a ubiquinol + NAD(+) + 4 H(+)(out). Functionally, core subunit of the mitochondrial membrane respiratory chain NADH dehydrogenase (Complex I) that is believed to belong to the minimal assembly required for catalysis. Complex I functions in the transfer of electrons from NADH to the respiratory chain. The immediate electron acceptor for the enzyme is believed to be ubiquinone. This is NADH-ubiquinone oxidoreductase chain 2 (ND2) from Beta vulgaris (Sugar beet).